A 555-amino-acid chain; its full sequence is 2-succinyl-5-enolpyruvyl-6-hydroxy-3-cyclohexene-1-carboxylate synthase (555 aa).

This sequence belongs to the TPP enzyme family. MenD subfamily. In terms of assembly, homodimer. Mg(2+) is required as a cofactor. The cofactor is Mn(2+). It depends on thiamine diphosphate as a cofactor.

It carries out the reaction isochorismate + 2-oxoglutarate + H(+) = 5-enolpyruvoyl-6-hydroxy-2-succinyl-cyclohex-3-ene-1-carboxylate + CO2. It participates in quinol/quinone metabolism; 1,4-dihydroxy-2-naphthoate biosynthesis; 1,4-dihydroxy-2-naphthoate from chorismate: step 2/7. The protein operates within quinol/quinone metabolism; menaquinone biosynthesis. In terms of biological role, catalyzes the thiamine diphosphate-dependent decarboxylation of 2-oxoglutarate and the subsequent addition of the resulting succinic semialdehyde-thiamine pyrophosphate anion to isochorismate to yield 2-succinyl-5-enolpyruvyl-6-hydroxy-3-cyclohexene-1-carboxylate (SEPHCHC). The chain is 2-succinyl-5-enolpyruvyl-6-hydroxy-3-cyclohexene-1-carboxylate synthase from Cronobacter sakazakii (strain ATCC BAA-894) (Enterobacter sakazakii).